The sequence spans 478 residues: Glutamate--tRNA ligase (478 aa).

The short motif at 23-33 is the 'HIGH' region element; sequence PSPTGFIHLGN. Positions 130 to 145 are enriched in basic and acidic residues; that stretch reads KQKPRYDGTWRPEEGK. Residues 130 to 153 form a disordered region; it reads KQKPRYDGTWRPEEGKTLPPVPEG. A 'KMSKS' region motif is present at residues 255–259; it reads KMSKR. K258 provides a ligand contact to ATP.

Belongs to the class-I aminoacyl-tRNA synthetase family. Glutamate--tRNA ligase type 1 subfamily. As to quaternary structure, monomer.

It is found in the cytoplasm. It catalyses the reaction tRNA(Glu) + L-glutamate + ATP = L-glutamyl-tRNA(Glu) + AMP + diphosphate. Functionally, catalyzes the attachment of glutamate to tRNA(Glu) in a two-step reaction: glutamate is first activated by ATP to form Glu-AMP and then transferred to the acceptor end of tRNA(Glu). In Paracidovorax citrulli (strain AAC00-1) (Acidovorax citrulli), this protein is Glutamate--tRNA ligase.